The primary structure comprises 197 residues: Segregation and condensation protein B (197 aa).

Belongs to the ScpB family. Homodimer. Homodimerization may be required to stabilize the binding of ScpA to the Smc head domains. Component of a cohesin-like complex composed of ScpA, ScpB and the Smc homodimer, in which ScpA and ScpB bind to the head domain of Smc. The presence of the three proteins is required for the association of the complex with DNA.

It is found in the cytoplasm. Functionally, participates in chromosomal partition during cell division. May act via the formation of a condensin-like complex containing Smc and ScpA that pull DNA away from mid-cell into both cell halves. The protein is Segregation and condensation protein B of Bacillus licheniformis (strain ATCC 14580 / DSM 13 / JCM 2505 / CCUG 7422 / NBRC 12200 / NCIMB 9375 / NCTC 10341 / NRRL NRS-1264 / Gibson 46).